Reading from the N-terminus, the 444-residue chain is MARKYFGTDGVRGKVGEFPITPDFVMKLGWAAGKVLSKKGTKKVLIGKDTRISGYMLESALEAGLSAAGLKAILMGPMPTPAVAYLTRTFRAEAGIVISASHNPFYDNGIKFFSADGTKLPDDVEMAIEAELDHEIKCVESADLGKAVRIEDAAGRYIEFCKSTFPSNLSLEGLKMVVDCGNGATYHIAPSVFRELGAEVIAIGCSPDGLNINDGVGSTAPDALAAKVLECKADLGVAFDGDGDRLVMVDHTGYIIDGDEILYIIARDALRNGRLKGGVVGTLMANMGLELALQTLGIPFARAKVGDRYVLEMMNEKGWRIGGENSGHIICLDQTTTGDGIVAALQVLMAICTAEMPLAKLRSGMSKFPQVLVNVRFAEGKDPLAADAVNQEVAKVEQELAGRGRVLLRKSGTEPLIRVMVEGEHEQQVRDMAQRIAQQVESAF.

Ser101 (phosphoserine intermediate) is an active-site residue. Residues Ser101, Asp240, Asp242, and Asp244 each contribute to the Mg(2+) site. Ser101 carries the phosphoserine modification.

Belongs to the phosphohexose mutase family. It depends on Mg(2+) as a cofactor. In terms of processing, activated by phosphorylation.

The enzyme catalyses alpha-D-glucosamine 1-phosphate = D-glucosamine 6-phosphate. In terms of biological role, catalyzes the conversion of glucosamine-6-phosphate to glucosamine-1-phosphate. This Aeromonas salmonicida (strain A449) protein is Phosphoglucosamine mutase.